A 123-amino-acid chain; its full sequence is Histone H2B 2 (123 aa).

Residues 1–32 (MAPPKPSAKGAKKAAKTVTKPKDGKKRRHARK) are disordered. Ser110 is a glycosylation site (O-linked (GlcNAc) serine). Residue Lys118 forms a Glycyl lysine isopeptide (Lys-Gly) (interchain with G-Cter in ubiquitin) linkage.

This sequence belongs to the histone H2B family. In terms of assembly, the nucleosome is a histone octamer containing two molecules each of H2A, H2B, H3 and H4 assembled in one H3-H4 heterotetramer and two H2A-H2B heterodimers. The octamer wraps approximately 147 bp of DNA. Monoubiquitination of Lys-118 gives a specific tag for epigenetic transcriptional activation and is also prerequisite for histone H3 'Lys-4' and 'Lys-79' methylation. In terms of processing, glcNAcylation at Ser-110 promotes monoubiquitination of Lys-118. It fluctuates in response to extracellular glucose, and associates with transcribed genes.

It is found in the nucleus. The protein localises to the chromosome. Core component of nucleosome. Nucleosomes wrap and compact DNA into chromatin, limiting DNA accessibility to the cellular machineries which require DNA as a template. Histones thereby play a central role in transcription regulation, DNA repair, DNA replication and chromosomal stability. DNA accessibility is regulated via a complex set of post-translational modifications of histones, also called histone code, and nucleosome remodeling. This chain is Histone H2B 2 (his-4), found in Caenorhabditis elegans.